The primary structure comprises 291 residues: Small ribosomal subunit biogenesis GTPase RsgA (291 aa).

The region spanning 63-221 is the CP-type G domain; that stretch reads QNELKRPPVS…VADTPGFSAL (159 aa). Residues 112-115 and 164-172 contribute to the GTP site; these read TKKD and GQSGVGKST. Residues cysteine 245, cysteine 250, histidine 252, and cysteine 258 each contribute to the Zn(2+) site.

The protein belongs to the TRAFAC class YlqF/YawG GTPase family. RsgA subfamily. In terms of assembly, monomer. Associates with 30S ribosomal subunit, binds 16S rRNA. It depends on Zn(2+) as a cofactor.

It is found in the cytoplasm. One of several proteins that assist in the late maturation steps of the functional core of the 30S ribosomal subunit. Helps release RbfA from mature subunits. May play a role in the assembly of ribosomal proteins into the subunit. Circularly permuted GTPase that catalyzes slow GTP hydrolysis, GTPase activity is stimulated by the 30S ribosomal subunit. The chain is Small ribosomal subunit biogenesis GTPase RsgA from Staphylococcus carnosus (strain TM300).